The primary structure comprises 201 residues: Twist-related protein 1 (201 aa).

Residues 1–18 (MMQDVSSSPVSPADDSLS) show a composition bias toward low complexity. The disordered stretch occupies residues 1–106 (MMQDVSSSPV…GGGSPQSYEE (106 aa)). Over residues 34 to 43 (RGGRKRRSSR) the composition is skewed to basic residues. Composition is skewed to gly residues over residues 46 to 65 (AGGG…GGDE) and 80 to 100 (GCGG…GGGS). The 52-residue stretch at 109–160 (TQRVMANVRERQRTQSLNEAFAALPKIIPTLPSDKLSKIQTLKLAARYIDFL) folds into the bHLH domain. A sufficient for transactivation activity region spans residues 162-190 (QVLQSDELDSKMASYVAHERLSYAFSVWR).

In terms of assembly, efficient DNA binding requires dimerization with another bHLH protein. Homodimer or heterodimer with E proteins such as TCF3. ID1 binds preferentially to TCF3 but does not interact efficiently with TWIST1 so ID1 levels control the amount of TCF3 available to dimerize with TWIST and thus determine the type of dimer formed.

It is found in the nucleus. Acts as a transcriptional regulator. Inhibits myogenesis by sequestrating E proteins, inhibiting trans-activation by MEF2, and inhibiting DNA-binding by MYOD1 through physical interaction. This interaction probably involves the basic domains of both proteins. Also represses expression of pro-inflammatory cytokines such as TNFA and IL1B. Regulates cranial suture patterning and fusion. Activates transcription as a heterodimer with E proteins. Regulates gene expression differentially, depending on dimer composition. Homodimers induce expression of FGFR2 and POSTN while heterodimers repress FGFR2 and POSTN expression and induce THBS1 expression. Heterodimerization is also required for osteoblast differentiation. Represses the activity of the circadian transcriptional activator: NPAS2-BMAL1 heterodimer. This chain is Twist-related protein 1 (TWIST1), found in Pan troglodytes (Chimpanzee).